The chain runs to 872 residues: Sine oculis-binding protein homolog (872 aa).

The segment covering 1-14 (MAEMEKEGRPPENK) has biased composition (basic and acidic residues). The disordered stretch occupies residues 1–26 (MAEMEKEGRPPENKRSRKPAHPVKRE). FCS-type zinc fingers lie at residues 142–180 (DDVS…KCFA) and 216–256 (FKNN…KCLN). 3 disordered regions span residues 308 to 354 (RRKA…KSMP), 411 to 484 (FIRG…PGAP), and 550 to 619 (KPPN…GRSE). The span at 319 to 344 (GQSQGPGPSASTTVSPSDTANCSVTK) shows a compositional bias: polar residues. Over residues 417-433 (HHASNPNSPLSNPMLPG) the composition is skewed to low complexity. The span at 460 to 484 (IHPPSTPTMPGNPPGLLPPPPPGAP) shows a compositional bias: pro residues. The short motif at 620–624 (VVDLT) is the SUMO interaction motif 1 (SIM); mediates the binding to polysumoylated substrates element. Position 629 is a phosphoserine (serine 629). An SUMO interaction motif 2 (SIM); mediates the binding to polysumoylated substrates motif is present at residues 651–655 (VIDLT). Lysine 675 participates in a covalent cross-link: Glycyl lysine isopeptide (Lys-Gly) (interchain with G-Cter in SUMO2). Serine 697 bears the Phosphoserine mark. The disordered stretch occupies residues 728–770 (AAEGAKGAEPPPEQPPPPPPPPPAPPKKLLSPEEPAVSELESV). Pro residues predominate over residues 736-753 (EPPPEQPPPPPPPPPAPP).

This sequence belongs to the SOBP family. Interacts (via SIM domains) with SUMO1 and SUMO2.

In terms of biological role, implicated in development of the cochlea. The sequence is that of Sine oculis-binding protein homolog from Bos taurus (Bovine).